The following is a 578-amino-acid chain: Putative ankyrin repeat protein FPV022 (578 aa).

ANK repeat units follow at residues 4-34, 38-67, 68-97, 100-129, 160-189, 222-251, 255-287, 320-349, 353-382, 386-415, and 419-449; these read RRKSAFKRAIDEDDVDIIRKLLSYKPIDLNK, KNRTILCRAVSMKSHKVAEFLLSNGSKMSA, CKVPPLIISVRNKDLTMAKILVSYGASVDV, KGETPLLTAIKTGYIEIIDYLLSLEPSGPY, YGHTALYYAVKKGNLSLIKLLVENKAITDN, EGTTALHYAVEAERLEAVRYLLDIGCDPKV, HSVSPLYYAIKRKNKIILDELIKFYTVEFMVNM, YLSELLYESIKTNNPEIVSLILGLGANINK, YGNIPLQTAIIYQTDNVFNLLLQKGADVNA, DGNTILHTLAACCKYKKIKLVLDLGSDINS, and NGRTPIEEACPCKKTIRTLISHLIIMIKKNK.

The polypeptide is Putative ankyrin repeat protein FPV022 (Fowlpox virus (strain NVSL) (FPV)).